A 497-amino-acid chain; its full sequence is tRNA (adenine(58)-N(1))-methyltransferase non-catalytic subunit TRM6 (497 aa).

Positions 69–102 are disordered; that stretch reads TNGGSLQPKKKKEEPTSETKEAGTDNRNIIDDGK. A compositionally biased stretch (basic and acidic residues) spans 79 to 102; that stretch reads KKEEPTSETKEAGTDNRNIIDDGK. Residues 94-104 form a substrate region; sequence NRNIIDDGKSQ. The residue at position 107 (T107) is a Phosphothreonine. 2 substrate regions span residues 145 to 154 and 175 to 182; these read KYIKKKKKKY and REPGKINH. The disordered stretch occupies residues 276–354; it reads SSEPKDIASV…EKQRRQEEQK (79 aa). Phosphoserine is present on residues S298 and S305. Positions 311–354 are enriched in basic and acidic residues; the sequence is ESNHPEEQERMEIVSQDPDYKEPKESGSKKDYIQEKQRRQEEQK. Substrate-binding residues include R349 and R377. Substrate regions lie at residues 415-423 and 434-441; these read RERGGVINL and QVLPDRSH. Positions 468 to 497 are disordered; that stretch reads PSLKSSTSTLESHKTEEPAAKKRKCPESDS. Over residues 478–497 the composition is skewed to basic and acidic residues; the sequence is ESHKTEEPAAKKRKCPESDS.

Belongs to the TRM6/GCD10 family. In terms of assembly, heterotetramer; composed of two copies of TRMT6 and two copies of TRMT61A.

The protein localises to the nucleus. Functionally, substrate-binding subunit of tRNA (adenine-N(1)-)-methyltransferase, which catalyzes the formation of N(1)-methyladenine at position 58 (m1A58) in initiator methionyl-tRNA. Together with the TRMT61A catalytic subunit, part of a mRNA N(1)-methyltransferase complex that mediates methylation of adenosine residues at the N(1) position of a small subset of mRNAs: N(1) methylation takes place in tRNA T-loop-like structures of mRNAs and is only present at low stoichiometries. The chain is tRNA (adenine(58)-N(1))-methyltransferase non-catalytic subunit TRM6 (TRMT6) from Bos taurus (Bovine).